A 199-amino-acid polypeptide reads, in one-letter code: NAD(P)H dehydrogenase (quinone) (199 aa).

A Flavodoxin-like domain is found at 4–190 (VLVLYYSAYG…AGARYQGKTI (187 aa)). Residues 10–15 (SAYGHI) and 78–80 (TRF) contribute to the FMN site. Position 12 (Y12) interacts with NAD(+). Substrate is bound at residue W98. FMN contacts are provided by residues 113–119 (STATQHG) and H134.

The protein belongs to the WrbA family. Requires FMN as cofactor.

It catalyses the reaction a quinone + NADH + H(+) = a quinol + NAD(+). It carries out the reaction a quinone + NADPH + H(+) = a quinol + NADP(+). In Rhodopseudomonas palustris (strain BisB5), this protein is NAD(P)H dehydrogenase (quinone).